The primary structure comprises 1812 residues: MSTCLLTSSFLSTSARAASFKDLVSKTPAWEKHNSTQQQNIWKDLTPNEKIKKWQEAALVPSFTQAQNDLGIKYKETDLSSFLDNTRHKARQARAEILLYIERVKQQDFDTKKQEYINQGVVPTDIEAATNLGISYDPSKIDNNVEHDQKVRRAEKDKKAVIELYISSINRDIKYKHYVDNDIIPEMQEVRTALNMNKDEAQSFVASIRTEIMENAKGQYIADSHIPTEKELKKKFGISRDDNRDGYIKSIRLKVMDKEKPQYIADSHIPTEKELEQKFGADKGEATNYIASIATQMMLGKKSYYIDNNIIPNADELMNEFKIGPVKTASYINQIRAGIEANQFLNNNDTTKPSTGRSQKKSGSKNDHWYMSNQSIHNTGTSSRIFTGREKKQRYFFDPISTFKTHFNTKANKGNLTQSQHSINRIIQQEENIEEFKNLIKTDPIIALTLQVDSSYKQEAVTTILSDFNDDTIQRVLFSNDKGQLDFNTNIDVKNRPILQELLENSSSEEKTKFAERIQDYATRNISNSQFEEKARLDLIKLAASKDKSSVENFLTLQLELKNIMQPYIVNSVYILTPEIVKEINIELKNKGLIRDSLTKDYMIKLAKEVSNHTLNSVIKVILSDSNILSNETNKILGLAVGNNANNLEQTQSGIPNPPPLPLNGGIPNPPPLPLNGSMPPPPPLHSQGFSSNSKHFDLNQLQTEYPHIHSLYIQFTHNTTVQSKAPLQPTASSATSTVRSTPETAYAKLYAEYRTETGGTKANDLQDQLIKRQADLTNVIRQILTESYANQGADEKTLLNLFSISTPEIAEKAKEAFNTLAQDQYIKDITVNGKKTITSEEIIKNLFNEDTDDAVKRILLSSCKISEELKRPIKLQFNQSELIRELQGKQNPFEQLEFAYINAKNFDQDIFGNRVDELINNPNILTIVQQATFLITEDTNLRKTINSDQAQAKLDDLRTAILSTIKFEELITANLPQHDFIAIVKEKDPELLKEFLKATTLKVTGNNNLDQLRLALPSFKGMSNEQIRILSNKLKMPIILKALKECSQEKATKYIHTGNMPPPPPPLPDSQDLELAYLTSLGITKFNANTSTLKTTPKTYHFSSDIALRYKEFTLSGQKSAGYKAKYSDADLLKKAIVESVAFEHSKNLSKAHQNNKYFEQIQEAVDTMYSSFIGPRTEIGQKIHNIYTSKLLELTKDKEFIKYVEDNIILSKKLTEAFTSADSDFIDSRTGLGQKIHDIYIQQLTKYPEEEVKEAFNTANPDFIGPRTEIGQEVHNIYKSQLLELTKDQELSLFTQQVLAESTELERKYGSDIQSGNSNNEKKVGRLDQEKLQSFKQENEATNDASSTKDDTQPEDSNKKSEQSDSKTALSPRLLSSNDSKNDKSSDDKKSLLALRSSDEDDTGYATDEEELEESNSTTNEELEESNSTTNEELEESNSTTNEELEESNSTTNEELKKDVVLESEDEAIDVSFKTEAITEQDEVTQRQQISDDTSGKVAILVQATSTLHKPVHYNINDRLTVAAIGAGDEETSINRGVWISGLYGINKQRIWKNIPKYQNRTTGITIGIDAEFINSHDVIGIAYSRLESQIKYNKKLGKTTVNGHLLSIYSLKELIKGFSLQTITSYGHNYIKNRSKNINNIIGKYQNNNLSFQTLLNYKYRTKYDLHFIPNIGFQYDYSRASNYKEYNVDIENLMIQKKSNQLFESSLGGKIVFKPIVTTNNIVLTPSLYGNIEHHFNNKNTKVNAKATFKGQTLQETIITLKQPKLGYNIGSNILMSRKNINVLLEYNYYTHRKYQSHQGLIKLKVNL.

Positions methionine 1–alanine 17 are cleaved as a signal peptide. Polar residues-rich tracts occupy residues phenylalanine 344–arginine 357 and methionine 371–serine 382. Disordered stretches follow at residues phenylalanine 344–serine 382, leucine 648–serine 691, and lysine 1338–valine 1462. Residues proline 656 to leucine 685 show a composition bias toward pro residues. Basic and acidic residues-rich tracts occupy residues serine 1349–aspartate 1367 and serine 1382–serine 1393. The span at aspartate 1401–glutamate 1416 shows a compositional bias: acidic residues. Residues serine 1417–asparagine 1455 are compositionally biased toward low complexity. In terms of domain architecture, Autotransporter spans glutamate 1533 to leucine 1812.

It localises to the cell outer membrane. This chain is Putative surface cell antigen sca2 (sca2), found in Rickettsia sibirica (strain ATCC VR-151 / 246).